Consider the following 257-residue polypeptide: Transcription factor GHD7 (257 aa).

Serine 68 carries the post-translational modification Phosphoserine; by CK1. In terms of domain architecture, CCT spans 190–232 (REAKLMRYKEKRKKRCYEKQIRYASRKAYAEMRPRVRGRFAKE). Positions 198 to 204 (KEKRKKR) match the Nuclear localization signal motif. The disordered stretch occupies residues 226 to 245 (RGRFAKEPDQEAVAPPSTYV).

As to quaternary structure, interacts with HD16/EL1. Post-translationally, phosphorylated at Ser-68 by HD16/EL1, a casein kinase 1. As to expression, expressed in the apical meristem, developing leaves, leaf sheaths of young seedling, root meristem, epidermal layer of developing stems and branch-primordia of developing panicles.

It is found in the nucleus. Probable transcription factor involved in the regulation of flowering time under long day (LD) conditions. Plays a major role as repressor of flowering. Controls flowering time by negatively regulating the expression of EHD1 and HD3A. The sequence is that of Transcription factor GHD7 from Oryza sativa subsp. japonica (Rice).